Consider the following 178-residue polypeptide: tRNA (cytidine(56)-2'-O)-methyltransferase (178 aa).

S-adenosyl-L-methionine is bound by residues Leu84, 112-116 (GAEKV), and 130-137 (VGNQPHSE).

This sequence belongs to the aTrm56 family. Homodimer.

Its subcellular location is the cytoplasm. The enzyme catalyses cytidine(56) in tRNA + S-adenosyl-L-methionine = 2'-O-methylcytidine(56) in tRNA + S-adenosyl-L-homocysteine + H(+). Functionally, specifically catalyzes the AdoMet-dependent 2'-O-ribose methylation of cytidine at position 56 in tRNAs. This Methanocella arvoryzae (strain DSM 22066 / NBRC 105507 / MRE50) protein is tRNA (cytidine(56)-2'-O)-methyltransferase.